Consider the following 397-residue polypeptide: Ribosomal RNA large subunit methyltransferase I (397 aa).

One can recognise a PUA domain in the interval 2–80 (AIRIKLKPGR…KEETIDADFF (79 aa)).

It belongs to the methyltransferase superfamily. RlmI family.

Its subcellular location is the cytoplasm. The catalysed reaction is cytidine(1962) in 23S rRNA + S-adenosyl-L-methionine = 5-methylcytidine(1962) in 23S rRNA + S-adenosyl-L-homocysteine + H(+). In terms of biological role, specifically methylates the cytosine at position 1962 (m5C1962) of 23S rRNA. The polypeptide is Ribosomal RNA large subunit methyltransferase I (Shewanella frigidimarina (strain NCIMB 400)).